Here is a 441-residue protein sequence, read N- to C-terminus: Tol-Pal system protein TolB (441 aa).

The first 39 residues, 1–39 (MPTMTPAFSRASLSEALRSYGLALLLFLATLLAWQPAHA), serve as a signal peptide directing secretion.

It belongs to the TolB family. The Tol-Pal system is composed of five core proteins: the inner membrane proteins TolA, TolQ and TolR, the periplasmic protein TolB and the outer membrane protein Pal. They form a network linking the inner and outer membranes and the peptidoglycan layer.

It is found in the periplasm. Functionally, part of the Tol-Pal system, which plays a role in outer membrane invagination during cell division and is important for maintaining outer membrane integrity. This Bordetella avium (strain 197N) protein is Tol-Pal system protein TolB.